Here is a 147-residue protein sequence, read N- to C-terminus: Large ribosomal subunit protein bL9 (147 aa).

This sequence belongs to the bacterial ribosomal protein bL9 family.

Its function is as follows. Binds to the 23S rRNA. This is Large ribosomal subunit protein bL9 from Mesoplasma florum (strain ATCC 33453 / NBRC 100688 / NCTC 11704 / L1) (Acholeplasma florum).